The sequence spans 172 residues: Transcriptional activator protein (172 aa).

The Nuclear localization signal motif lies at Lys56–Arg71. Residues Cys76 to His93 fold into a zinc finger. The disordered stretch occupies residues Asp119–Lys172. Residues Ser137–Ser152 are compositionally biased toward polar residues. Positions Ser158–Lys172 are transactivation.

The protein belongs to the geminiviridae transcriptional activator protein family. Monomer. Homodimer. Homooligomer. Self-interaction correlates with nuclear localization and efficient activation of transcription. Monomers suppress local silencing by interacting with and inactivating host adenosine kinase 2 (ADK2) in the cytoplasm. Interacts with and inhibits host SNF1 kinase. Binds to ssDNA. Post-translationally, phosphorylated.

It is found in the host nucleus. The protein localises to the host cytoplasm. Its function is as follows. Strong activator of the late viral genes promoters. Enhances the expression of the capsid protein and nuclear shuttle protein. Acts as a suppressor of RNA-mediated gene silencing, also known as post-transcriptional gene silencing (PTGS), a mechanism of plant viral defense that limits the accumulation of viral RNAs. Suppresses the host RNA silencing by inhibiting adenosine kinase 2 (ADK2), a kinase involved in a general methylation pathway. Also suppresses the host basal defense by interacting with and inhibiting SNF1 kinase, a key regulator of cell metabolism implicated in innate antiviral defense. Determines pathogenicity. The sequence is that of Transcriptional activator protein from Bean golden yellow mosaic virus (isolate Puerto Rico-Japan) (BGYMV).